Reading from the N-terminus, the 69-residue chain is NAD(P)H-quinone oxidoreductase subunit O (69 aa).

It belongs to the complex I NdhO subunit family. As to quaternary structure, NDH-1 can be composed of about 15 different subunits; different subcomplexes with different compositions have been identified which probably have different functions.

It is found in the cellular thylakoid membrane. The catalysed reaction is a plastoquinone + NADH + (n+1) H(+)(in) = a plastoquinol + NAD(+) + n H(+)(out). The enzyme catalyses a plastoquinone + NADPH + (n+1) H(+)(in) = a plastoquinol + NADP(+) + n H(+)(out). Its function is as follows. NDH-1 shuttles electrons from an unknown electron donor, via FMN and iron-sulfur (Fe-S) centers, to quinones in the respiratory and/or the photosynthetic chain. The immediate electron acceptor for the enzyme in this species is believed to be plastoquinone. Couples the redox reaction to proton translocation, and thus conserves the redox energy in a proton gradient. Cyanobacterial NDH-1 also plays a role in inorganic carbon-concentration. In Acaryochloris marina (strain MBIC 11017), this protein is NAD(P)H-quinone oxidoreductase subunit O.